The sequence spans 225 residues: MSQNSELRQSFIRFAVEAGVLSFGEFVTKAGRTSPYFFNAGKFADGALLGQVAQFYAKTLLDSGVEFDMLFGPAYKGITLASATAVALAGLGRNVGFAYNRKEAKDHGEGGSLVGAKLQGRVVIVDDVISAGTSVRESVELIRAAGATPAAVLILMDRMERSGNAVDIGERSAVQDVQAQYGMPVVSIANLDDLLGYLDNAGDPALAGYREKAAAYRDKYGVSAI.

Lysine 29 contributes to the 5-phospho-alpha-D-ribose 1-diphosphate binding site. 37-38 contacts orotate; it reads FF. 5-phospho-alpha-D-ribose 1-diphosphate is bound by residues 75-76, arginine 101, lysine 102, lysine 105, histidine 107, and 126-134; these read YK and DDVISAGTS. Orotate-binding residues include serine 130 and arginine 158.

The protein belongs to the purine/pyrimidine phosphoribosyltransferase family. PyrE subfamily. In terms of assembly, homodimer. The cofactor is Mg(2+).

The catalysed reaction is orotidine 5'-phosphate + diphosphate = orotate + 5-phospho-alpha-D-ribose 1-diphosphate. It participates in pyrimidine metabolism; UMP biosynthesis via de novo pathway; UMP from orotate: step 1/2. Catalyzes the transfer of a ribosyl phosphate group from 5-phosphoribose 1-diphosphate to orotate, leading to the formation of orotidine monophosphate (OMP). This Ralstonia pickettii (strain 12J) protein is Orotate phosphoribosyltransferase.